Consider the following 309-residue polypeptide: Aspartate carbamoyltransferase catalytic subunit (309 aa).

Carbamoyl phosphate-binding residues include R58 and T59. K86 is a binding site for L-aspartate. Carbamoyl phosphate contacts are provided by R108, H136, and Q139. L-aspartate contacts are provided by R169 and R223. Residues G265 and P266 each coordinate carbamoyl phosphate.

The protein belongs to the aspartate/ornithine carbamoyltransferase superfamily. ATCase family. In terms of assembly, heterododecamer (2C3:3R2) of six catalytic PyrB chains organized as two trimers (C3), and six regulatory PyrI chains organized as three dimers (R2).

It carries out the reaction carbamoyl phosphate + L-aspartate = N-carbamoyl-L-aspartate + phosphate + H(+). Its pathway is pyrimidine metabolism; UMP biosynthesis via de novo pathway; (S)-dihydroorotate from bicarbonate: step 2/3. Its function is as follows. Catalyzes the condensation of carbamoyl phosphate and aspartate to form carbamoyl aspartate and inorganic phosphate, the committed step in the de novo pyrimidine nucleotide biosynthesis pathway. In Akkermansia muciniphila (strain ATCC BAA-835 / DSM 22959 / JCM 33894 / BCRC 81048 / CCUG 64013 / CIP 107961 / Muc), this protein is Aspartate carbamoyltransferase catalytic subunit.